A 223-amino-acid chain; its full sequence is Large ribosomal subunit protein uL3 (223 aa).

The protein belongs to the universal ribosomal protein uL3 family. In terms of assembly, part of the 50S ribosomal subunit. Forms a cluster with proteins L14 and L19.

Its function is as follows. One of the primary rRNA binding proteins, it binds directly near the 3'-end of the 23S rRNA, where it nucleates assembly of the 50S subunit. In Cutibacterium acnes (strain DSM 16379 / KPA171202) (Propionibacterium acnes), this protein is Large ribosomal subunit protein uL3.